Here is a 1088-residue protein sequence, read N- to C-terminus: Methionine S-methyltransferase (1088 aa).

This sequence belongs to the class I-like SAM-binding methyltransferase superfamily. In terms of assembly, homotetramer. In terms of tissue distribution, expressed in the shoot, scutellum, and aleurone cells but not in the root or endosperm.

It is found in the cytoplasm. It carries out the reaction L-methionine + S-adenosyl-L-methionine = S-methyl-L-methionine + S-adenosyl-L-homocysteine. In terms of biological role, catalyzes the S-methylmethionine (SMM) biosynthesis from adenosyl-L-homocysteine (AdoMet) and methionine. SMM biosynthesis (by MMT1) and degradation (by HMT-1, HMT-2 and HMT-3) constitute the SMM cycle in plants, which is probably required to achieve short term control of AdoMet level. Also able to catalyze the selenium-methylmethionine (SeMM) from AdoMet and selenium-methionine (SeMet). May play a role in phoem sulfur transport; such function is however not essential. In Hordeum vulgare (Barley), this protein is Methionine S-methyltransferase (MMT1).